A 288-amino-acid polypeptide reads, in one-letter code: MDSVATPGRTLALVREKGLVPRKSRGQNFLVDANIVRKIARAAEVGPGDTVVEIGPGLGALTQELAARAGLVIAIEIDRELFAALEETLAGRDNVRLVAGDALKVDFDRLVAGILGTGEGRLPTYKVVANLPYYITTPILMHLLTSRFRIAELVLMVQAEVGYRMLARPGGKDYGALSVVVQYYTEPAVVLKVPRTVFYPRPEVDSLVLKLTCRTRPVVQVEDEDFFFRVVRAAFNQRRKTILNALGSLGFEKSKIMEALAGAGIDPRRRGETLGMEEFASISRTLQH.

S-adenosyl-L-methionine is bound by residues N28, L30, G55, E76, D101, and N130.

This sequence belongs to the class I-like SAM-binding methyltransferase superfamily. rRNA adenine N(6)-methyltransferase family. RsmA subfamily.

It is found in the cytoplasm. The catalysed reaction is adenosine(1518)/adenosine(1519) in 16S rRNA + 4 S-adenosyl-L-methionine = N(6)-dimethyladenosine(1518)/N(6)-dimethyladenosine(1519) in 16S rRNA + 4 S-adenosyl-L-homocysteine + 4 H(+). Specifically dimethylates two adjacent adenosines (A1518 and A1519) in the loop of a conserved hairpin near the 3'-end of 16S rRNA in the 30S particle. May play a critical role in biogenesis of 30S subunits. This chain is Ribosomal RNA small subunit methyltransferase A, found in Moorella thermoacetica (strain ATCC 39073 / JCM 9320).